A 329-amino-acid polypeptide reads, in one-letter code: Probable carboxylesterase 13 (329 aa).

N-acetylmethionine is present on methionine 1. The Involved in the stabilization of the negatively charged intermediate by the formation of the oxyanion hole motif lies at 81-83 (HGG). Active-site residues include serine 165, aspartate 269, and histidine 302.

It belongs to the 'GDXG' lipolytic enzyme family. In terms of tissue distribution, expressed in flowers.

The catalysed reaction is a carboxylic ester + H2O = an alcohol + a carboxylate + H(+). In terms of biological role, carboxylesterase acting on esters with varying acyl chain length. The sequence is that of Probable carboxylesterase 13 (CXE13) from Arabidopsis thaliana (Mouse-ear cress).